The following is a 368-amino-acid chain: Ankyrin repeat domain-containing protein 40 (368 aa).

Met-1 carries the N-acetylmethionine modification. ANK repeat units lie at residues 9-38 (EQQERLREAAALGDIREVQKLVESGVDVNS) and 43-72 (NGWTCLHWACKRNHGQVVSYLLKSGADKEI). Disordered regions lie at residues 93–115 (MGVEEEDDDDDDDDNLPQLKKES), 139–176 (DSAQMQNGGPSTPPASPPADGSPPLLPPGEPPLLGTFP), and 196–238 (ILRT…NGTY). Residues 95-107 (VEEEDDDDDDDDN) show a composition bias toward acidic residues. The segment covering 149–169 (STPPASPPADGSPPLLPPGEP) has biased composition (pro residues). A compositionally biased stretch (polar residues) spans 212–224 (PVSQSRSLFSSVP).

The polypeptide is Ankyrin repeat domain-containing protein 40 (ANKRD40) (Homo sapiens (Human)).